The sequence spans 148 residues: Probable histone H2B.2 (148 aa).

Positions 1 to 32 are enriched in basic and acidic residues; it reads MAPKGEKKPAEKKPAEEKKSTVAEKAPAEKKP. Residues 1–57 are disordered; it reads MAPKGEKKPAEKKPAEEKKSTVAEKAPAEKKPKAGKKLPKEGGSAAGEKKKKRSKKS. 3 positions are modified to N6-acetyllysine: K7, K36, and K37. K144 participates in a covalent cross-link: Glycyl lysine isopeptide (Lys-Gly) (interchain with G-Cter in ubiquitin).

Belongs to the histone H2B family. As to quaternary structure, the nucleosome is a histone octamer containing two molecules each of H2A, H2B, H3 and H4 assembled in one H3-H4 heterotetramer and two H2A-H2B heterodimers. The octamer wraps approximately 147 bp of DNA. Can be acetylated to form H2BK6ac, H2BK33ac and H2BK34ac. Post-translationally, monoubiquitinated to form H2BK143ub1; may give a specific tag for epigenetic transcriptional activation.

It is found in the nucleus. The protein localises to the chromosome. Its function is as follows. Core component of nucleosome. Nucleosomes wrap and compact DNA into chromatin, limiting DNA accessibility to the cellular machineries which require DNA as a template. Histones thereby play a central role in transcription regulation, DNA repair, DNA replication and chromosomal stability. DNA accessibility is regulated via a complex set of post-translational modifications of histones, also called histone code, and nucleosome remodeling. The chain is Probable histone H2B.2 from Medicago truncatula (Barrel medic).